Here is a 267-residue protein sequence, read N- to C-terminus: Membrane-spanning 4-domains subfamily A member 10 (267 aa).

The Cytoplasmic segment spans residues 1-61 (MKAEATVIPS…KKSSLLKELG (61 aa)). Residues 62 to 82 (AFHITIALLHLVFGGYLASIV) form a helical membrane-spanning segment. Topologically, residues 83 to 91 (KNLHLVVLK) are extracellular. The chain crosses the membrane as a helical span at residues 92–112 (SWYPFWGAASFLISGILAITM). At 113 to 121 (KTFSKTYLK) the chain is on the cytoplasmic side. The chain crosses the membrane as a helical span at residues 122–142 (MLCLMTNLISLFCVLSGLFVI). Over 143–171 (SKDLFLESPFESPIWRMYPNSTVHIQRLE) the chain is Extracellular. A helical transmembrane segment spans residues 172–192 (LALLCFTVLELFLPVPTAVTA). Over 193–267 (WRGDCPSAKN…GAAIWTQTAN (75 aa)) the chain is Cytoplasmic.

It belongs to the MS4A family.

Its subcellular location is the membrane. Functionally, may be involved in signal transduction as a component of a multimeric receptor complex. The polypeptide is Membrane-spanning 4-domains subfamily A member 10 (MS4A10) (Homo sapiens (Human)).